We begin with the raw amino-acid sequence, 697 residues long: Polyribonucleotide nucleotidyltransferase (697 aa).

The Mg(2+) site is built by Asp488 and Asp494. The KH domain maps to 555–614; it reads PTLLTLKINPDKIRDVIGKGGATIRALTEETGCTIDIEDDGSVKIYGETREKADEAVRRV. The 69-residue stretch at 624–692 folds into the S1 motif domain; the sequence is GAIYEGKVTR…QRGRIKLSMK (69 aa).

Belongs to the polyribonucleotide nucleotidyltransferase family. Component of the RNA degradosome, which is a multiprotein complex involved in RNA processing and mRNA degradation. The cofactor is Mg(2+).

It is found in the cytoplasm. The catalysed reaction is RNA(n+1) + phosphate = RNA(n) + a ribonucleoside 5'-diphosphate. Involved in mRNA degradation. Catalyzes the phosphorolysis of single-stranded polyribonucleotides processively in the 3'- to 5'-direction. This chain is Polyribonucleotide nucleotidyltransferase, found in Alcanivorax borkumensis (strain ATCC 700651 / DSM 11573 / NCIMB 13689 / SK2).